A 157-amino-acid polypeptide reads, in one-letter code: Class 10 plant pathogenesis-related protein 2F (157 aa).

Residue Asp8 participates in trans-zeatin binding. Residues Pro32, Val35, and Ile38 each coordinate Ca(2+). Residues Glu60, His69, Tyr81, and Tyr83 each coordinate trans-zeatin.

Belongs to the BetVI family.

It is found in the cytoplasm. The protein resides in the cytosol. Class II ribonuclease (RNase). Binds to cytokinins. Interacts with melatonin. The protein is Class 10 plant pathogenesis-related protein 2F of Lupinus luteus (European yellow lupine).